The sequence spans 317 residues: Orange carotenoid-binding protein (317 aa).

One can recognise an OCP N-terminal domain in the interval 18–169 (ADVVPATIAR…DMGFTAGKDG (152 aa)). Echinenone-binding positions include 34 to 38 (EDQLA), 37 to 44 (LALIWFAY), 80 to 83 (TQAM), 107 to 117 (LGFWYRLGELM), 125 to 129 (IPAGY), 151 to 161 (ITVLRNAVVDM), Y201, 245 to 250 (CQNLKL), 273 to 284 (VQTPWFGGNVGM), and W288.

This sequence belongs to the orange carotenoid-binding protein family. Monomer. Interacts with the APC core of the phycobilisome (PB), probably at a ratio of 1:1 in a light-independent manner; possibly only OCP-R binds to PBs. Interacts with FRP. Detachment from PBs is accelerated by FPR. It depends on 3'-hydroxyechinenone as a cofactor. Proteolytically cleaved into a red 16.7 kDa form named red carotenoid-binding protein (RCP) which lacks 15 residues from the N-terminus and approximately 150 residues from the C-terminus.

The protein localises to the cellular thylakoid membrane. Acts as a blue-light photoreceptor and photo-protectant. Essential for inhibiting damaged induced by excess blue-green light via a process known as non-photochemical quenching (NPQ). In the dark or dim light the stable inactive form (OCP-O) is orange, upon illumination with blue-green light it converts to a metastable active red form (OCP-R), inducing energy dissipation, quenching cellular fluorescence via NPQ. One OCP-R molecule is sufficient to quench 1 phycobilisome. More OCP-R accumulates under high-light and low temperature; in the dark OCP-R spontaneously reverts to OCP-O. Reversion of OCP-O is accelerated by FRP. A kinetic study suggests conversion of OCP-O to OCP-R is limited by cis-trans proline isomerization of either Gln224-Pro225 or Pro225-Pro226. The sequence is that of Orange carotenoid-binding protein from Synechocystis sp. (strain ATCC 27184 / PCC 6803 / Kazusa).